The sequence spans 339 residues: Phenylalanine--tRNA ligase alpha subunit (339 aa).

Glu-254 is a Mg(2+) binding site.

Belongs to the class-II aminoacyl-tRNA synthetase family. Phe-tRNA synthetase alpha subunit type 1 subfamily. In terms of assembly, tetramer of two alpha and two beta subunits. Mg(2+) is required as a cofactor.

The protein resides in the cytoplasm. The catalysed reaction is tRNA(Phe) + L-phenylalanine + ATP = L-phenylalanyl-tRNA(Phe) + AMP + diphosphate + H(+). In Chlamydia pneumoniae (Chlamydophila pneumoniae), this protein is Phenylalanine--tRNA ligase alpha subunit (pheS).